The sequence spans 323 residues: tRNA U34 carboxymethyltransferase (323 aa).

Carboxy-S-adenosyl-L-methionine is bound by residues Lys91, Trp105, Lys110, Gly130, 152 to 154 (DPT), 181 to 182 (IE), Met196, Tyr200, and Arg315.

This sequence belongs to the class I-like SAM-binding methyltransferase superfamily. CmoB family. Homotetramer.

The enzyme catalyses carboxy-S-adenosyl-L-methionine + 5-hydroxyuridine(34) in tRNA = 5-carboxymethoxyuridine(34) in tRNA + S-adenosyl-L-homocysteine + H(+). Its function is as follows. Catalyzes carboxymethyl transfer from carboxy-S-adenosyl-L-methionine (Cx-SAM) to 5-hydroxyuridine (ho5U) to form 5-carboxymethoxyuridine (cmo5U) at position 34 in tRNAs. This Escherichia coli O6:H1 (strain CFT073 / ATCC 700928 / UPEC) protein is tRNA U34 carboxymethyltransferase.